Here is a 439-residue protein sequence, read N- to C-terminus: Protein translocase subunit SecY (439 aa).

10 helical membrane-spanning segments follow: residues I28–G48, I73–I93, L127–V147, P156–I176, L179–A199, V220–V240, G276–F296, I318–I338, L375–G395, and T401–A421.

It belongs to the SecY/SEC61-alpha family. In terms of assembly, component of the Sec protein translocase complex. Heterotrimer consisting of SecY, SecE and SecG subunits. The heterotrimers can form oligomers, although 1 heterotrimer is thought to be able to translocate proteins. Interacts with the ribosome. Interacts with SecDF, and other proteins may be involved. Interacts with SecA.

The protein resides in the cell inner membrane. Its subcellular location is the cellular thylakoid membrane. The central subunit of the protein translocation channel SecYEG. Consists of two halves formed by TMs 1-5 and 6-10. These two domains form a lateral gate at the front which open onto the bilayer between TMs 2 and 7, and are clamped together by SecE at the back. The channel is closed by both a pore ring composed of hydrophobic SecY resides and a short helix (helix 2A) on the extracellular side of the membrane which forms a plug. The plug probably moves laterally to allow the channel to open. The ring and the pore may move independently. In Synechococcus elongatus (strain ATCC 33912 / PCC 7942 / FACHB-805) (Anacystis nidulans R2), this protein is Protein translocase subunit SecY.